A 461-amino-acid chain; its full sequence is uncharacterized protein (461 aa).

The span at 1–19 (MEKCSHESGRHSAENDGKY) shows a compositional bias: basic and acidic residues. Residues 1–21 (MEKCSHESGRHSAENDGKYDI) are disordered.

Belongs to the CapA family.

Its function is as follows. Could be involved in the biosynthesis of a cell wall component. This is an uncharacterized protein from Sinorhizobium fredii (strain NBRC 101917 / NGR234).